Reading from the N-terminus, the 751-residue chain is ABC transporter G family member 22 (751 aa).

The interval 26–81 (ADIRSPHGSMDANGVPATAPAAVGGGGTLSRKSSRRLMGMSPGRSSGAGTHIRKSR) is disordered. The 247-residue stretch at 157 to 403 (LKFRDVTYKV…FSSIGCSPLI (247 aa)) folds into the ABC transporter domain. Residue 197–204 (GPSGSGKT) coordinates ATP. Positions 498–707 (EQYCILFCRG…TYKLLLKVQY (210 aa)) constitute an ABC transmembrane type-2 domain. Helical transmembrane passes span 516–536 (FSWLRVTQVLSTAVILGLLWW), 552–572 (LLFFIAVFWGFFPVFTAIFAF), 602–622 (LPLDFILPSLFLLVVYFMTGL), 634–654 (LTVFLCIIAAQGLGLAIGAIL), 666–686 (VTVMTFMLAGGFFVKKVPVFI), and 722–742 (GLTEVAALVVMIFGYRLLAYL).

The protein belongs to the ABC transporter superfamily. ABCG family. Eye pigment precursor importer (TC 3.A.1.204) subfamily.

The protein resides in the membrane. In Arabidopsis thaliana (Mouse-ear cress), this protein is ABC transporter G family member 22 (ABCG22).